Reading from the N-terminus, the 49-residue chain is Lectin alpha chain (49 aa).

This sequence belongs to the leguminous lectin family. In terms of assembly, homotetramer. Post-translationally, the beta and gamma chains are produced by partial proteolytic processing of the lectin alpha chain by an asparaginyl endopeptidase. Mixture of 60% alpha lectin and 40% of its beta and gamma proteolytic fragments. As to expression, seed.

Its function is as follows. D-mannose/D-glucose-binding lectin. In Dioclea violacea, this protein is Lectin alpha chain.